A 662-amino-acid polypeptide reads, in one-letter code: Zinc finger protein 17 (662 aa).

Residues 8 to 101 (MVFEDVAIHF…LLKDILHLAE (94 aa)) enclose the KRAB domain. C2H2-type zinc fingers lie at residues 190-212 (YSCT…QKIH), 218-240 (YECS…QRNH), 246-268 (YKCS…QKIH), 274-296 (YECS…QRIH), 302-324 (YVCS…QKIH), 358-380 (FYCC…QRVH), 386-408 (YECN…QKVH), 414-436 (YECS…QRVH), 442-464 (YECN…QRVH), 470-492 (YECS…QRVH), 498-520 (FECS…QRIH), 526-548 (YECS…RRNH), 554-576 (FECT…QKVH), 582-604 (YKCS…ERVH), 610-632 (YECS…RRIH), and 638-660 (YQCS…QKVH).

Belongs to the krueppel C2H2-type zinc-finger protein family.

The protein resides in the nucleus. May be involved in transcriptional regulation. This is Zinc finger protein 17 (ZNF17) from Homo sapiens (Human).